We begin with the raw amino-acid sequence, 1195 residues long: MKEIVDAYFKKYGIVNHQLDSMNSFYATPDNPNSVMQQIVDETKVSDDADPGYFVLDPAKTGGHDIRIYYGRVRENGHYVGEQTIFIGKPEIKEASGASNQITPNEARLRDLNYLAPVTLKLRIVEDGIEKGSEIIKVGDLPVMVRSKICTLSEENLDQYIEKNNGPIGLSRREKLQYVGEDPDDPGGYFIIGGSERVIVSLEDLAPNKIMVEWEDRYESKVEVSKVFSQRGGFRALTSMEKGTDGTINVSIPSVAGTVPLVILMKALGLERDVDVHDAIASVPEMEPIIYSNIEDSKNPKVLPPNGVNTTEDAISYLEKRFAAGQAKEFRDKKISQMLDHSLLPHLGDSPSDRIRKAIYLGRMARSLLELSLGIRKEDDKDHLANKRIKLAGDLMDELFRSAFQSVMKDLKYQLEKTYNRKRGIKIRPAVRQDLLTQRVLHAMSTGNWIGGRTGVSQLLDRVSNLSTISHLRRIISPLTRTQPHFEARDLHPTQWGRICPNETPEGQNCGLVKNAALLINVTQGIDPDSVMEILKGMDVREVLEESPKKGRVYLNGDFIGYHDDPRYLVSRIREERRSGRMSDEVNVRYDDNTNEVIVNSDRGRLRRPLLILKDGKTVLDRTMIERLKHGEISFEDLVKQGAIEWLDAEEEEDTYVAVYAYDIPEKCPHCNSYLYRSMVDWVNPGESEITLECGFCHQRFNVPSKLSKENTHLEIDPAMILGVVASIIPYPEHNSSPRITIASAMAKQSLGFAQSNVRIRPDTRGHLLHYPQVPLVRTRVMDYIHYDRRPAGQNFVVAVLSYEGYNIQDALVINKAAIERGLGRSTFFRTYSAEERRYPGGQEDKFEIPTHDIIGARAEEYYKNLDDSGIIFPEAYVEGSDVLIGKTSPPRFLEEGEERLGPQRRRESSVTMRPNESGYVDNVFLTVSESNSRVVKIKVRSERIPELGDKFASRHGQKGVVGLVVPQEDMPFTEDGIIPDLIFNPHSIPSRMTVGHILEMIGGKIASRTGRFIDGTIFSGEPEKSLRDALVKYGFRKSSTEVMYDGITGRRFKADIFVGVIYYQKLHHMVAGKFHARSRGPVQILTRQPTEGRSRQGGLRFGEMERDTLIAHGAAMVIKDRLLDQSDGTVLYVCGNPSCGHIAIYDRRKGTLRCPVCGNTGNIYPIETSYAFKLMRDELISLGVVMRLMLGDMK.

Residues 894–909 (LEEGEERLGPQRRRES) show a composition bias toward basic and acidic residues. A disordered region spans residues 894–914 (LEEGEERLGPQRRRESSVTMR). The Zn(2+) site is built by Cys1135, Cys1140, Cys1155, and Cys1158.

This sequence belongs to the RNA polymerase beta chain family. In terms of assembly, part of the RNA polymerase complex. Zn(2+) is required as a cofactor.

The protein resides in the cytoplasm. The enzyme catalyses RNA(n) + a ribonucleoside 5'-triphosphate = RNA(n+1) + diphosphate. DNA-dependent RNA polymerase (RNAP) catalyzes the transcription of DNA into RNA using the four ribonucleoside triphosphates as substrates. This subunit is involved in DNA promoter recognition. This is DNA-directed RNA polymerase subunit Rpo2 from Thermoplasma acidophilum (strain ATCC 25905 / DSM 1728 / JCM 9062 / NBRC 15155 / AMRC-C165).